Here is a 1039-residue protein sequence, read N- to C-terminus: Integrin alpha-4 (1039 aa).

Positions 1–40 are cleaved as a signal peptide; the sequence is MFSTKSAWLRNGGADQGPRGIALREAVMLLLYFGVPTGPS. The Extracellular portion of the chain corresponds to 41-983; that stretch reads YNLDPENALL…LHHQRPKRHF (943 aa). FG-GAP repeat units follow at residues 42 to 107, 117 to 184, 193 to 244, 246 to 298, 299 to 358, 362 to 419, and 423 to 485; these read NLDP…PNQT, SGEP…TELS, DYTR…QYKA, VDRQ…ENEL, NIVY…GAVM, ERVL…GISS, and QRIE…HPES. N-linked (GlcNAc...) asparagine glycosylation is found at Asn-86, Asn-105, and Asn-145. Cys-98 and Cys-108 are joined by a disulfide. Cystine bridges form between Cys-151–Cys-172 and Cys-190–Cys-205. N-linked (GlcNAc...) asparagine glycosylation occurs at Asn-236. Ca(2+) is bound by residues Asp-321, Asn-323, Asp-325, Asp-329, Asp-384, Asp-386, Asp-388, Asp-392, Asp-446, Asp-448, Asn-450, Tyr-452, and Asp-454. An N-linked (GlcNAc...) asparagine glycan is attached at Asn-487. 2 cysteine pairs are disulfide-bonded: Cys-493/Cys-502 and Cys-508/Cys-564. Asn-525 and Asn-545 each carry an N-linked (GlcNAc...) asparagine glycan. The SG1 signature appears at 613-623; it reads KKEKDVIRKMI. Cys-629 and Cys-634 are disulfide-bonded. 3 N-linked (GlcNAc...) asparagine glycosylation sites follow: Asn-633, Asn-652, and Asn-667. Cys-705 and Cys-718 are oxidised to a cystine. Asn-813 and Asn-828 each carry an N-linked (GlcNAc...) asparagine glycan. Disulfide bonds link Cys-859–Cys-897 and Cys-904–Cys-909. Residues 984–1007 traverse the membrane as a helical segment; sequence TIIIITISLLLGLIVLLLISCVMW. Residues 1008–1039 are Cytoplasmic-facing; that stretch reads KAGFFKRQYKSILQEENRRDSWSYVNSKSNDD. The GFFKR motif signature appears at 1010 to 1014; the sequence is GFFKR. Residue Ser-1028 is modified to Phosphoserine.

This sequence belongs to the integrin alpha chain family. Heterodimer of an alpha and a beta subunit. The alpha subunit can sometimes be cleaved into two non-covalently associated fragments. Alpha-4 associates with either beta-1 or beta-7. Alpha-4 interacts with PXN, LPXN, and TGFB1I1/HIC5. Interacts with CSPG4 through CSPG4 chondroitin sulfate glycosaminoglycan. Interacts with JAML; integrin alpha-4/beta-1 may regulate leukocyte to endothelial cells adhesion by controlling JAML homodimerization. ITGA4:ITGB1 is found in a ternary complex with CX3CR1 and CX3CL1. Interacts with MDK. ITGA4:ITGB1 interacts with MDK; this interaction mediates MDK-induced osteoblast cells migration through PXN phosphorylation. Integrin ITGA4:ITGB1 interacts with SVEP1 (via Sushi domain 21); thereby inhibits Ca(2+) intracellular signaling and as a result represses vasocontraction. ITGA4:ITGB1 interacts with SELP. ITGA4:ITGB1 interacts with BCAM. Post-translationally, phosphorylation on Ser-1028 inhibits PXN binding. Expressed in the media layer of the arterial wall (at protein level). Weakly expression in the thymus, spleen and mesenteric lymph nodes.

Its subcellular location is the membrane. Integrins alpha-4/beta-1 (VLA-4 or LPAM-2) and alpha-4/beta-7 (LPAM-1) are receptors for fibronectin. They recognize one or more domains within the alternatively spliced CS-1 and CS-5 regions of fibronectin. They are also receptors for VCAM1. Integrin alpha-4/beta-1 recognizes the sequence Q-I-D-S in VCAM1. Integrin alpha-4/beta-7 is also a receptor for MADCAM1. It recognizes the sequence L-D-T in MADCAM1. On activated endothelial cells integrin VLA-4 triggers homotypic aggregation for most VLA-4-positive leukocyte cell lines. It may also participate in cytolytic T-cell interactions with target cells. ITGA4:ITGB1 binds to fractalkine (CX3CL1) and may act as its coreceptor in CX3CR1-dependent fractalkine signaling. ITGA4:ITGB1 binds to PLA2G2A via a site (site 2) which is distinct from the classical ligand-binding site (site 1) and this induces integrin conformational changes and enhanced ligand binding to site 1. Integrin ITGA4:ITGB1 represses PRKCA-mediated L-type voltage-gated channel Ca(2+) influx and ROCK-mediated calcium sensitivity in vascular smooth muscle cells via its interaction with SVEP1, thereby inhibiting vasocontraction. The chain is Integrin alpha-4 (Itga4) from Mus musculus (Mouse).